The following is a 69-amino-acid chain: Probable cold shock protein y4cH (69 aa).

Positions 5–65 constitute a CSD domain; the sequence is GTVKWFNATK…DRKSGKMSAD (61 aa).

The protein resides in the cytoplasm. This Sinorhizobium fredii (strain NBRC 101917 / NGR234) protein is Probable cold shock protein y4cH.